A 141-amino-acid chain; its full sequence is Perlwapin-like protein (141 aa).

The first 19 residues, 1-19 (MNVYFILFLGVFAFIEVNC), serve as a signal peptide directing secretion. Residues 23–71 (KSKSLGTCPKLDVSTVCVVDYKFNCLFQKQCPSGYRCCTYGCNRRCAAV) form the WAP domain. Intrachain disulfides connect cysteine 30/cysteine 60, cysteine 39/cysteine 64, cysteine 47/cysteine 59, cysteine 53/cysteine 68, cysteine 81/cysteine 105, and cysteine 92/cysteine 104.

In terms of tissue distribution, component of the organic matrix of calcified shell layers like nacre and prisms.

The protein resides in the secreted. In Mytilus galloprovincialis (Mediterranean mussel), this protein is Perlwapin-like protein.